Here is a 242-residue protein sequence, read N- to C-terminus: Type III pantothenate kinase (242 aa).

5-12 (DLGNTRLK) serves as a coordination point for ATP. Substrate is bound by residues Y94 and 100 to 103 (GCDR). D102 (proton acceptor) is an active-site residue. Residue T124 coordinates ATP. Residue T175 coordinates substrate.

This sequence belongs to the type III pantothenate kinase family. Homodimer. NH4(+) is required as a cofactor. The cofactor is K(+).

The protein resides in the cytoplasm. It catalyses the reaction (R)-pantothenate + ATP = (R)-4'-phosphopantothenate + ADP + H(+). It functions in the pathway cofactor biosynthesis; coenzyme A biosynthesis; CoA from (R)-pantothenate: step 1/5. Catalyzes the phosphorylation of pantothenate (Pan), the first step in CoA biosynthesis. The chain is Type III pantothenate kinase from Psychrobacter cryohalolentis (strain ATCC BAA-1226 / DSM 17306 / VKM B-2378 / K5).